The following is a 269-amino-acid chain: Mitochondrial genome maintenance protein MGM101 (269 aa).

The transit peptide at 1–30 (MKSIFKVRGCVSHAAQFCQKRTVVSTGTSN) directs the protein to the mitochondrion.

The protein belongs to the MGM101 family.

It is found in the mitochondrion matrix. The protein localises to the mitochondrion nucleoid. Its function is as follows. Performs an essential function in the repair of oxidatively damaged mtDNA that is required for the maintenance of the mitochondrial genome. Binds to DNA. The sequence is that of Mitochondrial genome maintenance protein MGM101 (MGM101) from Saccharomyces cerevisiae (strain ATCC 204508 / S288c) (Baker's yeast).